Consider the following 267-residue polypeptide: MEMO1 family protein MM_1761 (267 aa).

Belongs to the MEMO1 family.

The sequence is that of MEMO1 family protein MM_1761 from Methanosarcina mazei (strain ATCC BAA-159 / DSM 3647 / Goe1 / Go1 / JCM 11833 / OCM 88) (Methanosarcina frisia).